The chain runs to 802 residues: Ras GTPase-activating protein 4 (802 aa).

2 C2 domains span residues 1 to 105 (MAKR…SGWT) and 116 to 232 (VQGE…EGWF). Residues D21, D27, D74, D76, S79, D82, D149, D155, D202, D204, S207, and D210 each contribute to the Ca(2+) site. In terms of domain architecture, Ras-GAP spans 317–545 (GLAKDFLDLL…AQLKDFIMKL (229 aa)). Residues 565–672 (PPVKEGPLFI…WLSALRKAST (108 aa)) enclose the PH domain. The Btk-type zinc finger occupies 674-710 (NRGLLRSYHPGIFRGDKWSCCHQKDKTDQGCDKTHSR). Residues H682, C693, C694, and C704 each contribute to the Zn(2+) site.

Ca(2+) serves as cofactor. As to expression, isoform 2 is expressed in osteoblasts.

It localises to the cytoplasm. The protein localises to the cytosol. The protein resides in the cell membrane. Ca(2+)-dependent Ras GTPase-activating protein, that switches off the Ras-MAPK pathway following a stimulus that elevates intracellular calcium. Functions as an adaptor for Cdc42 and Rac1 during FcR-mediated phagocytosis. Isoform 2 activates the Ras pathway and promotes RANKL shedding by modulating the expression of MMP14. The polypeptide is Ras GTPase-activating protein 4 (Rasa4) (Mus musculus (Mouse)).